The sequence spans 145 residues: Large ribosomal subunit protein bL9 (145 aa).

The protein belongs to the bacterial ribosomal protein bL9 family.

In terms of biological role, binds to the 23S rRNA. In Mesomycoplasma hyopneumoniae (strain 7448) (Mycoplasma hyopneumoniae), this protein is Large ribosomal subunit protein bL9.